Consider the following 320-residue polypeptide: UV DNA damage endonuclease (320 aa).

It belongs to the uve1/UvsE family.

Functionally, component in a DNA repair pathway. Removal of UV LIGHT damaged nucleotides. Recognizes pyrimidine dimers and cleave a phosphodiester bond immediately 5' to the lesion. The polypeptide is UV DNA damage endonuclease (Bacillus pumilus (strain SAFR-032)).